Here is a 373-residue protein sequence, read N- to C-terminus: P2Y purinoceptor 1 (373 aa).

Residues 1–51 are Extracellular-facing; the sequence is MTEVPWSAVPNGTDAAFLAGLGSLWGNSTIASTAAVSSSFRCALIKTGFQF. Residues asparagine 11 and asparagine 27 are each glycosylated (N-linked (GlcNAc...) asparagine). 2 disulfides stabilise this stretch: cysteine 42-cysteine 296 and cysteine 124-cysteine 202. Lysine 46 serves as a coordination point for ADP. A helical membrane pass occupies residues 52 to 74; the sequence is YYLPAVYILVFIIGFLGNSVAIW. Residues 75-87 are Cytoplasmic-facing; sequence MFVFHMKPWSGIS. Residues 88 to 109 form a helical membrane-spanning segment; that stretch reads VYMFNLALADFLYVLTLPALIF. Topologically, residues 110–125 are extracellular; sequence YYFNKTDWIFGDVMCK. An N-linked (GlcNAc...) asparagine glycan is attached at asparagine 113. A helical membrane pass occupies residues 126–147; that stretch reads LQRFIFHVNLYGSILFLTCISA. Over 148 to 166 the chain is Cytoplasmic; it reads HRYSGVVYPLKSLGRLKKK. Residues 167–188 traverse the membrane as a helical segment; sequence NAIYVSVLVWLIVVVAISPILF. Residues 189-214 lie on the Extracellular side of the membrane; sequence YSGTGIRKNKTVTCYDSTSDEYLRSY. N-linked (GlcNAc...) asparagine glycosylation is present at asparagine 197. Residue 203 to 205 participates in ADP binding; it reads YDS. A helical membrane pass occupies residues 215 to 237; it reads FIYSMCTTVAMFCIPLVLILGCY. The Cytoplasmic segment spans residues 238–260; that stretch reads GLIVRALIYKDLDNSPLRRKSIY. Residues 261-284 form a helical membrane-spanning segment; the sequence is LVIIVLTVFAVSYIPFHVMKTMNL. Residues 283–287, 303–306, and arginine 310 contribute to the ADP site; these read NLRAR and YATY. The Extracellular portion of the chain corresponds to 285–303; it reads RARLDFQTPEMCDFNDRVY. A helical transmembrane segment spans residues 304–325; sequence ATYQVTRGLASLNSCVDPILYF. At 326 to 373 the chain is on the cytoplasmic side; sequence LAGDTFRRRLSRATRKASRRSEANLQSKSEEMTLNILSEFKQNGDTSL.

The protein belongs to the G-protein coupled receptor 1 family. As to expression, expressed in muscle, heart, liver, kidney, lung, brain, spleen, but not in testis.

The protein localises to the cell membrane. Receptor for extracellular adenine nucleotides such as ADP. In platelets, binding to ADP leads to mobilization of intracellular calcium ions via activation of phospholipase C, a change in platelet shape, and ultimately platelet aggregation. The protein is P2Y purinoceptor 1 (P2ry1) of Rattus norvegicus (Rat).